Here is a 401-residue protein sequence, read N- to C-terminus: Phosrestin-1 (401 aa).

Belongs to the arrestin family.

In terms of biological role, directly interacts with light-activated rhodopsin thereby activating the phosphorylation of metarhodopsin. Inhibits the dephosphorylation of metarhodopsin. The protein is Phosrestin-1 (ARR2) of Calliphora vicina (Blue blowfly).